Consider the following 158-residue polypeptide: MNTSQAEIELDLDLQLAIENSQLPSKQNFELWVRTALPKTMAEAELTIRIVDEAESQELNSTYRGKDKPTNVLSFPFEAPPEIEIPLLGDLIICAPVVELEALQQNKPLQAHWAHMVVHGCLHLLGYDHINDAEAEEMESLETQLVESLGFNNPYKEQ.

Zn(2+)-binding residues include His119, His123, and His129.

It belongs to the endoribonuclease YbeY family. Requires Zn(2+) as cofactor.

It is found in the cytoplasm. Single strand-specific metallo-endoribonuclease involved in late-stage 70S ribosome quality control and in maturation of the 3' terminus of the 16S rRNA. The sequence is that of Endoribonuclease YbeY from Shewanella sediminis (strain HAW-EB3).